A 112-amino-acid chain; its full sequence is DNA-binding protein Mboo_1886 (112 aa).

The protein belongs to the PDCD5 family.

In Methanoregula boonei (strain DSM 21154 / JCM 14090 / 6A8), this protein is DNA-binding protein Mboo_1886.